The primary structure comprises 657 residues: UvrABC system protein B (657 aa).

Residues 23–414 form the Helicase ATP-binding domain; it reads KSIKKGNKYQ…KENIFHQIMR (392 aa). An ATP-binding site is contributed by 36-43; the sequence is GVTGSGKT. Residues 89–112 carry the Beta-hairpin motif; that stretch reads YYDYYQPEAYIPRTDVFIEKDSST. Residues 431–593 enclose the Helicase C-terminal domain; that stretch reads QVEILFDEAK…ITPTSVKRHI (163 aa). The UVR domain maps to 622–657; it reads AKLAKELRKQMLEAAKALEFEKAAAIRDEINKLRDL.

Belongs to the UvrB family. As to quaternary structure, forms a heterotetramer with UvrA during the search for lesions. Interacts with UvrC in an incision complex.

The protein resides in the cytoplasm. Functionally, the UvrABC repair system catalyzes the recognition and processing of DNA lesions. A damage recognition complex composed of 2 UvrA and 2 UvrB subunits scans DNA for abnormalities. Upon binding of the UvrA(2)B(2) complex to a putative damaged site, the DNA wraps around one UvrB monomer. DNA wrap is dependent on ATP binding by UvrB and probably causes local melting of the DNA helix, facilitating insertion of UvrB beta-hairpin between the DNA strands. Then UvrB probes one DNA strand for the presence of a lesion. If a lesion is found the UvrA subunits dissociate and the UvrB-DNA preincision complex is formed. This complex is subsequently bound by UvrC and the second UvrB is released. If no lesion is found, the DNA wraps around the other UvrB subunit that will check the other stand for damage. This chain is UvrABC system protein B, found in Campylobacter jejuni (strain RM1221).